A 265-amino-acid chain; its full sequence is Neuronal membrane glycoprotein M6-b (265 aa).

A helical membrane pass occupies residues 31–51 (GGVPYASLVATILCFSGVALF). N-linked (GlcNAc...) asparagine glycosylation occurs at Asn73. Transmembrane regions (helical) follow at residues 90-110 (VIYG…AEGF) and 136-156 (FVFL…FSAV). The N-linked (GlcNAc...) asparagine glycan is linked to Asn177. The helical transmembrane segment at 224–244 (LFIVACAGAGATVIALLIYMM) threads the bilayer. Phosphoserine is present on Ser257.

Belongs to the myelin proteolipid protein family. Interacts with SERT. In terms of tissue distribution, neurons and glia; cerebellar Bergmann glia, in glia within white matter tracts of the cerebellum and cerebrum, and in embryonic dorsal root ganglia.

It localises to the cell membrane. In terms of biological role, may be involved in neural development. Involved in regulation of osteoblast function and bone formation. Involved in matrix vesicle release by osteoblasts; this function seems to involve maintenance of the actin cytoskeleton. May be involved in cellular trafficking of SERT and thereby in regulation of serotonin uptake. The chain is Neuronal membrane glycoprotein M6-b (GPM6B) from Homo sapiens (Human).